The primary structure comprises 393 residues: Pectate lyase A (393 aa).

The signal sequence occupies residues 1–32 (MMNKASGRSFTRSSKYLLATLIAGMMASGVSA). 4 residues coordinate Ca(2+): Glu174, Asp176, Asp216, and Asp220. Residue Arg273 is part of the active site. An intrachain disulfide couples Cys330 to Cys358.

It belongs to the polysaccharide lyase 1 family. PLADES subfamily. Ca(2+) serves as cofactor.

The protein resides in the secreted. It catalyses the reaction Eliminative cleavage of (1-&gt;4)-alpha-D-galacturonan to give oligosaccharides with 4-deoxy-alpha-D-galact-4-enuronosyl groups at their non-reducing ends.. It participates in glycan metabolism; pectin degradation; 2-dehydro-3-deoxy-D-gluconate from pectin: step 2/5. Functionally, involved in maceration and soft-rotting of plant tissue. In Dickeya chrysanthemi (Pectobacterium chrysanthemi), this protein is Pectate lyase A (pelA).